The chain runs to 274 residues: Cytochrome b-c1 complex subunit Rieske, mitochondrial (274 aa).

Over 79-110 (SHTDVKVPDFSDYRRAEVLDSTKSSKESSEAR) the chain is Mitochondrial matrix. A helical membrane pass occupies residues 111-137 (KGFSYLVTATTTVGVAYAAKNVVSQFV). Topologically, residues 138 to 274 (SSMSASADVL…FTSDDVVVVG (137 aa)) are mitochondrial intermembrane. The Rieske domain occupies 187–272 (EAAVEVSQLR…YEFTSDDVVV (86 aa)). Cysteine 217, histidine 219, cysteine 236, histidine 239, and serine 241 together coordinate [2Fe-2S] cluster. A disulfide bond links cysteine 222 and cysteine 238.

This sequence belongs to the Rieske iron-sulfur protein family. As to quaternary structure, component of the ubiquinol-cytochrome c oxidoreductase (cytochrome b-c1 complex, complex III, CIII), a multisubunit enzyme composed of 11 subunits. The complex is composed of 3 respiratory subunits cytochrome b, cytochrome c1 and Rieske protein UQCRFS1, 2 core protein subunits UQCRC1/QCR1 and UQCRC2/QCR2, and 6 low-molecular weight protein subunits UQCRH/QCR6, UQCRB/QCR7, UQCRQ/QCR8, UQCR10/QCR9, UQCR11/QCR10 and subunit 9, the cleavage product of Rieske protein UQCRFS1. The complex exists as an obligatory dimer and forms supercomplexes (SCs) in the inner mitochondrial membrane with NADH-ubiquinone oxidoreductase (complex I, CI) and cytochrome c oxidase (complex IV, CIV), resulting in different assemblies (supercomplex SCI(1)III(2)IV(1) and megacomplex MCI(2)III(2)IV(2)). Incorporation of the Rieske protein UQCRFS1 is the penultimate step in complex III assembly. Interacts with TTC19, which is involved in the clearance of UQCRFS1 fragments. In terms of assembly, component of the ubiquinol-cytochrome c oxidoreductase (cytochrome b-c1 complex, complex III, CIII). Subunit 9 corresponds to the mitochondrial targeting sequence (MTS) of Rieske protein UQCRFS1. It is retained after processing and incorporated inside complex III, where it remains bound to the complex and localizes between the 2 core subunits UQCRC1/QCR1 and UQCRC2/QCR2. [2Fe-2S] cluster serves as cofactor. In terms of processing, proteolytic processing is necessary for the correct insertion of UQCRFS1 in the complex III dimer. Several fragments are generated during UQCRFS1 insertion, most probably due to the endogenous matrix-processing peptidase (MPP) activity of the 2 core protein subunits UQCRC1/QCR1 and UQCRC2/QCR2, which are homologous to the 2 mitochondrial-processing peptidase (MPP) subunits beta-MPP and alpha-MPP respectively. The action of the protease is also necessary for the clearance of the UQCRFS1 fragments.

The protein resides in the mitochondrion inner membrane. It carries out the reaction a quinol + 2 Fe(III)-[cytochrome c](out) = a quinone + 2 Fe(II)-[cytochrome c](out) + 2 H(+)(out). Its function is as follows. Component of the ubiquinol-cytochrome c oxidoreductase, a multisubunit transmembrane complex that is part of the mitochondrial electron transport chain which drives oxidative phosphorylation. The respiratory chain contains 3 multisubunit complexes succinate dehydrogenase (complex II, CII), ubiquinol-cytochrome c oxidoreductase (cytochrome b-c1 complex, complex III, CIII) and cytochrome c oxidase (complex IV, CIV), that cooperate to transfer electrons derived from NADH and succinate to molecular oxygen, creating an electrochemical gradient over the inner membrane that drives transmembrane transport and the ATP synthase. The cytochrome b-c1 complex catalyzes electron transfer from ubiquinol to cytochrome c, linking this redox reaction to translocation of protons across the mitochondrial inner membrane, with protons being carried across the membrane as hydrogens on the quinol. In the process called Q cycle, 2 protons are consumed from the matrix, 4 protons are released into the intermembrane space and 2 electrons are passed to cytochrome c. The Rieske protein is a catalytic core subunit containing a [2Fe-2S] iron-sulfur cluster. It cycles between 2 conformational states during catalysis to transfer electrons from the quinol bound in the Q(0) site in cytochrome b to cytochrome c1. Incorporation of UQCRFS1 is the penultimate step in complex III assembly. In terms of biological role, component of the ubiquinol-cytochrome c oxidoreductase (cytochrome b-c1 complex, complex III, CIII). UQCRFS1 undergoes proteolytic processing once it is incorporated in the complex III dimer. One of the fragments, called subunit 9, corresponds to its mitochondrial targeting sequence (MTS). The proteolytic processing is necessary for the correct insertion of UQCRFS1 in the complex III dimer, but the persistence of UQCRFS1-derived fragments may prevent newly imported UQCRFS1 to be processed and assembled into complex III and is detrimental for the complex III structure and function. In Mus musculus (Mouse), this protein is Cytochrome b-c1 complex subunit Rieske, mitochondrial.